A 1002-amino-acid chain; its full sequence is E3 ubiquitin-protein ligase BRE1B (1002 aa).

The segment at 1 to 32 (MSGLSNKRAAGDGGSGPPEKKLNREEKTTTTL) is disordered. The span at 18–28 (PEKKLNREEKT) shows a compositional bias: basic and acidic residues. At lysine 20 the chain carries N6-acetyllysine. Serine 42 is subject to Phosphoserine. A coiled-coil region spans residues 55-91 (KNKKLAERLEQRQACEDELRERIEKLEKRQATDDATL). The tract at residues 120-148 (SSGTEVPGCQEGLTRDVIPRTDPGTSDLR) is disordered. 2 coiled-coil regions span residues 190–378 (KAAV…LRSL) and 438–526 (LQKK…ASGS). 2 positions are modified to N6-acetyllysine: lysine 356 and lysine 518. Disordered regions lie at residues 520-562 (RAQA…PDSK) and 579-652 (KKEE…ESEL). Residues lysine 579 and lysine 580 each participate in a glycyl lysine isopeptide (Lys-Gly) (interchain with G-Cter in SUMO2) cross-link. Serine 585 and serine 586 each carry phosphoserine. Basic and acidic residues-rich tracts occupy residues 603–620 (RGRE…EREG) and 634–652 (RADR…ESEL). A coiled-coil region spans residues 628–947 (AASTLSRADR…EEIKEYKARL (320 aa)). An RING-type zinc finger spans residues 949–988 (CPCCNTRKKDAVLTKCFHVFCFECVRGRYEARQRKCPKCN).

Belongs to the BRE1 family. In terms of assembly, component of the RNF20/40 complex (also known as BRE1 complex) probably composed of 2 copies of RNF20/BRE1A and 2 copies of RNF40/BRE1B. Interacts with UBE2E1/UBCH6. Interacts with RB1 and WAC. May interact with STX1A. In terms of tissue distribution, ubiquitously expressed. Expressed in brain, testis, heart, liver and kidney. Weakly expressed in lung, spleen and skeletal muscle (at protein level).

The protein resides in the nucleus. It catalyses the reaction S-ubiquitinyl-[E2 ubiquitin-conjugating enzyme]-L-cysteine + [acceptor protein]-L-lysine = [E2 ubiquitin-conjugating enzyme]-L-cysteine + N(6)-ubiquitinyl-[acceptor protein]-L-lysine.. It functions in the pathway protein modification; protein ubiquitination. In terms of biological role, component of the RNF20/40 E3 ubiquitin-protein ligase complex that mediates monoubiquitination of 'Lys-120' of histone H2B (H2BK120ub1). H2BK120ub1 gives a specific tag for epigenetic transcriptional activation and is also prerequisite for histone H3 'Lys-4' and 'Lys-79' methylation (H3K4me and H3K79me, respectively). It thereby plays a central role in histone code and gene regulation. The RNF20/40 complex forms a H2B ubiquitin ligase complex in cooperation with the E2 enzyme UBE2A or UBE2B; reports about the cooperation with UBE2E1/UBCH are contradictory. Required for transcriptional activation of Hox genes. In Rattus norvegicus (Rat), this protein is E3 ubiquitin-protein ligase BRE1B (Rnf40).